A 972-amino-acid polypeptide reads, in one-letter code: Nuclear factor NF-kappa-B p105 subunit (972 aa).

The RHD domain occupies 39 to 246 (ADGPYLQILE…DAIYDSKAPN (208 aa)). At Cys-61 the chain carries S-nitrosocysteine; alternate. The S-(15-deoxy-Delta12,14-prostaglandin J2-9-yl)cysteine; alternate moiety is linked to residue Cys-61. Lys-325 participates in a covalent cross-link: Glycyl lysine isopeptide (Lys-Gly) (interchain with G-Cter in SUMO2). Ser-337 is modified (phosphoserine; by PKA). The Nuclear localization signal signature appears at 360–365 (QRKRQK). Residues 372–394 (DSFGGGSGAGAGGGGMFGSGGGG) are GRR. Positions 425–473 (KSNAGMKHGTIDTPSKNDSEGCGKNVDREAVNLSGKVTEPTEQDKESSM) are disordered. Residues Lys-431 and Lys-440 each carry the N6-acetyllysine; by EP300 modification. The tract at residues 435–972 (IDTPSKNDSE…GQEGPIEGKI (538 aa)) is interaction with CFLAR. Residues 439–454 (SKNDSEGCGKNVDREA) show a composition bias toward basic and acidic residues. ANK repeat units lie at residues 539-568 (NGDS…GLIS), 578-607 (LYQT…DLSL), 611-640 (LGNS…AALL), 647-676 (EGLN…DVNA), 681-711 (SGRT…HVDS), and 715-744 (DGTT…DPLV). The tract at residues 647–681 (EGLNAIHIAVMSNSMPCLLLLVAAGADVNAQERKS) is essential for interaction with HIF1AN. Asn-675 carries the (3S)-3-hydroxyasparagine; by HIF1AN modification. Phosphoserine is present on Ser-756. Residues 768–798 (PGTTPLDMATNWQVFDILNGKPYEPEFTSDD) form an ANK 7 repeat. One can recognise a Death domain in the interval 814-889 (LQLYKLLEIP…EAIEVIQAAF (76 aa)). The disordered stretch occupies residues 894-926 (TAAPSPGKGAPQTLSLPLSSASTRSPVDEVRDD). Residues 905–918 (QTLSLPLSSASTRS) show a composition bias toward polar residues. Residues Ser-908 and Ser-912 each carry the phosphoserine; by GSK3-beta; in vitro modification. Residue Ser-927 is modified to Phosphoserine. Ser-931 and Ser-936 each carry phosphoserine; by IKKB. At Ser-941 the chain carries Phosphoserine. Thr-947 carries the post-translational modification Phosphothreonine.

Component of the NF-kappa-B p65-p50 complex. Homodimer; component of the NF-kappa-B p50-p50 complex. Component of the NF-kappa-B p105-p50 complex. Component of the NF-kappa-B p50-c-Rel complex. Component of a complex consisting of the NF-kappa-B p50-p50 homodimer and BCL3. Also interacts with MAP3K8. NF-kappa-B p50 subunit interacts with NCOA3 coactivator, which may coactivate NF-kappa-B dependent expression via its histone acetyltransferase activity. Interacts with TSC22D3; this interaction prevents nuclear translocation and DNA-binding. Interacts with SPAG9 and UNC5CL. NFKB1/p105 interacts with CFLAR; the interaction inhibits p105 processing into p50. NFKB1/p105 forms a ternary complex with MAP3K8 and TNIP2. Interacts with GSK3B; the interaction prevents processing of p105 to p50. NFKB1/p50 interacts with NFKBIE. NFKB1/p50 interacts with NFKBIZ. Nuclear factor NF-kappa-B p50 subunit interacts with NFKBID. Directly interacts with MEN1. Interacts with HIF1AN. Interacts with FEM1A; interaction is direct. Post-translationally, generation of the NF-kappa-B p50 (Nuclear factor NF-kappa-B p50 subunit) transcription factor takes place both cotranslationally and post-translationally via non-mutually exclusive mechanisms. A cotranslational processing allows the production of both p50 and p105 (Nuclear factor NF-kappa-B p105 subunit) from a single NFKB1 mRNA. While translation occurs, the particular unfolded structure after the GRR repeat region acts as a substrate for the proteasome, promoting degradation of the C-terminus. The GRR acts as a proteasomal 'stop signal', protecting the region upstream of the GRR from degradation and promoting generation of p50. It is unclear if limited proteasome degradation during cotranslational processing depends on ubiquitination. NF-kappa-B p50 is also generated post-translationally following ubiquitination by the KPC complex, leading to limited processing by the proteasome downstream of the GRR region, thereby generating p50. Phosphorylation at the C-terminus by IKBKB/IKKB acts as a signal for ubiquitination and promotes either complete degradation or processing to generate the NF-kappa-B p50 (Nuclear factor NF-kappa-B p50 subunit). Phosphorylation at Ser-908 and Ser-912 primes p105 for proteolytic processing in response to TNF-alpha stimulation. Phosphorylation at Ser-927, Ser-931 and Ser-936 are required for BTRC/BTRCP-mediated ubiquitination and proteolysis. Phosphorylation at Ser-931 is also required for ubiquitination by the KPC complex and limited processing to generate NF-kappa-B p50 (Nuclear factor NF-kappa-B p50 subunit). In terms of processing, polyubiquitinated at multiple Lys residues in the C-terminus. Polyubiquitinated by the SCF(FBXW11) and SCF(BTRC) complexes following phosphorylation at Ser-923, Ser-927, Ser-931 and Ser-936, leading to its complete degradation. In contrast, polyubiquitination by the KPC complex following phosphorylation at Ser-931 leads to limited proteosomal processing and generation of the active NF-kappa-B p50 (Nuclear factor NF-kappa-B p50 subunit). Post-translationally, S-nitrosylation of Cys-61 affects DNA binding. The covalent modification of cysteine by 15-deoxy-Delta12,14-prostaglandin-J2 is autocatalytic and reversible. It may occur as an alternative to other cysteine modifications, such as S-nitrosylation and S-palmitoylation.

The protein localises to the cytoplasm. It localises to the nucleus. Functionally, NF-kappa-B is a pleiotropic transcription factor present in almost all cell types and is the endpoint of a series of signal transduction events that are initiated by a vast array of stimuli related to many biological processes such as inflammation, immunity, differentiation, cell growth, tumorigenesis and apoptosis. NF-kappa-B is a homo- or heterodimeric complex formed by the Rel-like domain-containing proteins RELA/p65, RELB, NFKB1/p105, NFKB1/p50, REL and NFKB2/p52 and the heterodimeric p65-p50 complex appears to be most abundant one. The dimers bind at kappa-B sites in the DNA of their target genes and the individual dimers have distinct preferences for different kappa-B sites that they can bind with distinguishable affinity and specificity. Different dimer combinations act as transcriptional activators or repressors, respectively. NF-kappa-B is controlled by various mechanisms of post-translational modification and subcellular compartmentalization as well as by interactions with other cofactors or corepressors. NF-kappa-B complexes are held in the cytoplasm in an inactive state complexed with members of the NF-kappa-B inhibitor (I-kappa-B) family. In a conventional activation pathway, I-kappa-B is phosphorylated by I-kappa-B kinases (IKKs) in response to different activators, subsequently degraded thus liberating the active NF-kappa-B complex which translocates to the nucleus. NF-kappa-B heterodimeric p65-p50 and RelB-p50 complexes are transcriptional activators. The NF-kappa-B p50-p50 homodimer is a transcriptional repressor, but can act as a transcriptional activator when associated with BCL3. NFKB1 appears to have dual functions such as cytoplasmic retention of attached NF-kappa-B proteins by p105 and generation of p50 by a cotranslational processing. The proteasome-mediated process ensures the production of both p50 and p105 and preserves their independent function, although processing of NFKB1/p105 also appears to occur post-translationally. p50 binds to the kappa-B consensus sequence 5'-GGRNNYYCC-3', located in the enhancer region of genes involved in immune response and acute phase reactions. In a complex with MAP3K8, NFKB1/p105 represses MAP3K8-induced MAPK signaling; active MAP3K8 is released by proteasome-dependent degradation of NFKB1/p105. P105 is the precursor of the active p50 subunit (Nuclear factor NF-kappa-B p50 subunit) of the nuclear factor NF-kappa-B. Acts as a cytoplasmic retention of attached NF-kappa-B proteins by p105. Its function is as follows. Constitutes the active form, which associates with RELA/p65 to form the NF-kappa-B p65-p50 complex to form a transcription factor. Together with RELA/p65, binds to the kappa-B consensus sequence 5'-GGRNNYYCC-3', located in the enhancer region of genes involved in immune response and acute phase reactions. This Canis lupus familiaris (Dog) protein is Nuclear factor NF-kappa-B p105 subunit (NFKB1).